Consider the following 232-residue polypeptide: Ubiquinone biosynthesis O-methyltransferase (232 aa).

Residues R36, G55, D76, and M120 each contribute to the S-adenosyl-L-methionine site.

This sequence belongs to the methyltransferase superfamily. UbiG/COQ3 family.

It carries out the reaction a 3-demethylubiquinol + S-adenosyl-L-methionine = a ubiquinol + S-adenosyl-L-homocysteine + H(+). The enzyme catalyses a 3-(all-trans-polyprenyl)benzene-1,2-diol + S-adenosyl-L-methionine = a 2-methoxy-6-(all-trans-polyprenyl)phenol + S-adenosyl-L-homocysteine + H(+). Its pathway is cofactor biosynthesis; ubiquinone biosynthesis. O-methyltransferase that catalyzes the 2 O-methylation steps in the ubiquinone biosynthetic pathway. This chain is Ubiquinone biosynthesis O-methyltransferase, found in Burkholderia orbicola (strain MC0-3).